The chain runs to 433 residues: GTPase Der (433 aa).

EngA-type G domains follow at residues Lys-5 to Asn-167 and Ile-174 to Glu-349. GTP-binding positions include Gly-11–Ser-18, Asp-58–Phe-62, Asn-119–Asp-122, Gly-180–Ser-187, Asp-227–Ile-231, and Ser-292–Asp-295. In terms of domain architecture, KH-like spans Glu-349–Ile-429.

It belongs to the TRAFAC class TrmE-Era-EngA-EngB-Septin-like GTPase superfamily. EngA (Der) GTPase family. Associates with the 50S ribosomal subunit.

GTPase that plays an essential role in the late steps of ribosome biogenesis. This is GTPase Der from Borrelia garinii subsp. bavariensis (strain ATCC BAA-2496 / DSM 23469 / PBi) (Borreliella bavariensis).